The following is a 238-amino-acid chain: Probable xyloglucan-specific endo-beta-1,4-glucanase A (238 aa).

Positions 1–18 are cleaved as a signal peptide; sequence MKLSLSVALSLAASTAQA. Asparagine 106 and asparagine 171 each carry an N-linked (GlcNAc...) asparagine glycan.

It belongs to the glycosyl hydrolase 12 (cellulase H) family.

The protein localises to the secreted. The catalysed reaction is xyloglucan + H2O = xyloglucan oligosaccharides.. Catalyzes endohydrolysis of 1,4-beta-D-glucosidic linkages in xyloglucan with retention of the beta-configuration of the glycosyl residues. Specific for xyloglucan and does not hydrolyze other cell wall components. The polypeptide is Probable xyloglucan-specific endo-beta-1,4-glucanase A (xgeA) (Aspergillus fumigatus (strain ATCC MYA-4609 / CBS 101355 / FGSC A1100 / Af293) (Neosartorya fumigata)).